Consider the following 484-residue polypeptide: Phosphatidylinositol N-acetylglucosaminyltransferase subunit A (484 aa).

The Cytoplasmic portion of the chain corresponds to 1 to 421 (MACRGGAGNG…RLDRLISHCG (421 aa)). Ser-21 and Ser-24 each carry phosphoserine. The helical transmembrane segment at 422 to 442 (PVTGYIFALLAVFNFLFLIFL) threads the bilayer. The Lumenal segment spans residues 443–484 (RWMTPDSIIDVAIDATGPRGAWTNNYSHSKRGGENNEISETR). Asn-467 carries N-linked (GlcNAc...) asparagine glycosylation.

It belongs to the glycosyltransferase group 1 family. Glycosyltransferase 4 subfamily. As to quaternary structure, component of the glycosylphosphatidylinositol-N-acetylglucosaminyltransferase (GPI-GnT) complex composed at least by PIGA, PIGC, PIGH, PIGP, PIGQ, PIGY and DPM2. Interacts with PIGC, PIGH, PIGP, PIGQ and DPM2. Interacts directly with PIGY; this interaction regulates glycosylphosphatidylinositol-N-acetylglucosaminyltransferase activity. Interacts with PIGQ.

It localises to the endoplasmic reticulum membrane. The catalysed reaction is a 1,2-diacyl-sn-glycero-3-phospho-(1D-myo-inositol) + UDP-N-acetyl-alpha-D-glucosamine = a 6-(N-acetyl-alpha-D-glucosaminyl)-1-(1,2-diacyl-sn-glycero-3-phospho)-1D-myo-inositol + UDP + H(+). It participates in glycolipid biosynthesis; glycosylphosphatidylinositol-anchor biosynthesis. In terms of biological role, catalytic subunit of the glycosylphosphatidylinositol-N-acetylglucosaminyltransferase (GPI-GnT) complex that catalyzes the transfer of N-acetylglucosamine from UDP-N-acetylglucosamine to phosphatidylinositol and participates in the first step of GPI biosynthesis. This is Phosphatidylinositol N-acetylglucosaminyltransferase subunit A from Homo sapiens (Human).